The chain runs to 155 residues: Ribosomal RNA large subunit methyltransferase H (155 aa).

S-adenosyl-L-methionine-binding positions include Gly-104 and 123-128; that span reads FGNITL.

Belongs to the RNA methyltransferase RlmH family. Homodimer.

Its subcellular location is the cytoplasm. The catalysed reaction is pseudouridine(1915) in 23S rRNA + S-adenosyl-L-methionine = N(3)-methylpseudouridine(1915) in 23S rRNA + S-adenosyl-L-homocysteine + H(+). In terms of biological role, specifically methylates the pseudouridine at position 1915 (m3Psi1915) in 23S rRNA. This chain is Ribosomal RNA large subunit methyltransferase H, found in Mesoplasma florum (strain ATCC 33453 / NBRC 100688 / NCTC 11704 / L1) (Acholeplasma florum).